Consider the following 96-residue polypeptide: Antigen H4 (96 aa).

The disordered stretch occupies residues 1 to 20 (EFQEEIKEGVEEHKHEDDPE). An N-linked (GlcNAc...) asparagine glycan is attached at N34.

The protein is Antigen H4 (H4) of Toxoplasma gondii.